The sequence spans 312 residues: UPF0725 protein At3g19520 (312 aa).

This sequence belongs to the UPF0725 (EMB2204) family.

The sequence is that of UPF0725 protein At3g19520 from Arabidopsis thaliana (Mouse-ear cress).